Here is a 737-residue protein sequence, read N- to C-terminus: Catalase-peroxidase (737 aa).

The first 23 residues, 1 to 23 (MLKKILPVLITLAIVHNTPTAWA), serve as a signal peptide directing secretion. The segment at residues 102-223 (WHGAGTYRIY…LAATQMGLIY (122 aa)) is a cross-link (tryptophyl-tyrosyl-methioninium (Trp-Tyr) (with M-249)). His103 serves as the catalytic Proton acceptor. The segment at residues 223–249 (YVNPEGPNGKPDPVAAAKDIREAFARM) is a cross-link (tryptophyl-tyrosyl-methioninium (Tyr-Met) (with W-102)). His264 lines the heme b pocket.

The protein belongs to the peroxidase family. Peroxidase/catalase subfamily. In terms of assembly, homodimer or homotetramer. Heme b serves as cofactor. Post-translationally, formation of the three residue Trp-Tyr-Met cross-link is important for the catalase, but not the peroxidase activity of the enzyme.

It catalyses the reaction H2O2 + AH2 = A + 2 H2O. It carries out the reaction 2 H2O2 = O2 + 2 H2O. Its function is as follows. Bifunctional enzyme with both catalase and broad-spectrum peroxidase activity. This is Catalase-peroxidase from Yersinia pseudotuberculosis serotype O:3 (strain YPIII).